The chain runs to 1405 residues: DNA-directed RNA polymerase subunit beta' (1405 aa).

Zn(2+)-binding residues include C70, C72, C85, and C88. Positions 458, 460, and 462 each coordinate Mg(2+). Zn(2+)-binding residues include C813, C887, C894, and C897.

This sequence belongs to the RNA polymerase beta' chain family. In terms of assembly, the RNAP catalytic core consists of 2 alpha, 1 beta, 1 beta' and 1 omega subunit. When a sigma factor is associated with the core the holoenzyme is formed, which can initiate transcription. Mg(2+) serves as cofactor. Requires Zn(2+) as cofactor.

The enzyme catalyses RNA(n) + a ribonucleoside 5'-triphosphate = RNA(n+1) + diphosphate. Functionally, DNA-dependent RNA polymerase catalyzes the transcription of DNA into RNA using the four ribonucleoside triphosphates as substrates. The sequence is that of DNA-directed RNA polymerase subunit beta' from Albidiferax ferrireducens (strain ATCC BAA-621 / DSM 15236 / T118) (Rhodoferax ferrireducens).